The following is a 396-amino-acid chain: Obg-like ATPase 1 (396 aa).

Residues 23 to 283 enclose the OBG-type G domain; the sequence is LKIGIVGLPN…LSAEERQKYL (261 aa). 32–37 lines the ATP pocket; sequence NVGKST. 2 residues coordinate Mg(2+): S36 and T56. L231 is a binding site for ATP. The short motif at 267–274 is the Nuclear export signal element; sequence LELKLQEL. An N6-acetyllysine modification is found at K294. The TGS domain occupies 304–387; it reads QLEYFFTAGP…EDGDIIFFKF (84 aa).

The protein belongs to the TRAFAC class OBG-HflX-like GTPase superfamily. OBG GTPase family. YchF/OLA1 subfamily. Monomer. Mg(2+) is required as a cofactor. As to expression, expressed in all tissues tested but its expression is more abundant in testis, liver, lung, and brain. Overexpressed in several malignancies, including cancers of the colon, rectum, ovary, lung, stomach, and uterus.

The protein localises to the cytoplasm. It is found in the nucleus. It localises to the nucleolus. In terms of biological role, hydrolyzes ATP, and can also hydrolyze GTP with lower efficiency. Has lower affinity for GTP. This is Obg-like ATPase 1 from Homo sapiens (Human).